We begin with the raw amino-acid sequence, 879 residues long: Nuclear autoantigen Sp-100 (879 aa).

At alanine 2 the chain carries N-acetylalanine. The residue at position 18 (serine 18) is a Phosphoserine. Positions 33-149 constitute an HSR domain; it reads DLQRMFTEDQ…IYKGFENVIH (117 aa). A disordered region spans residues 154–245; sequence LQESEEEERE…EQCAQKAEPT (92 aa). The residue at position 157 (serine 157) is a Phosphoserine. The short motif at 165–168 is the D-box; recognition signal for CDC20-mediated degradation element; it reads RSGL. Phosphoserine occurs at positions 171, 180, and 228. The segment covering 176–200 has biased composition (polar residues); the sequence is TGENSFRSLTWPPSGSPSHAGTTPP. Residues 207–228 are compositionally biased toward basic and acidic residues; that stretch reads HPCETEQINAKRKDTTSDKDDS. The span at 229 to 238 shows a compositional bias: polar residues; the sequence is LGSQQTNEQC. Lysine 241 is covalently cross-linked (Glycyl lysine isopeptide (Lys-Gly) (interchain with G-Cter in SUMO2)). The PxVxL motif motif lies at 284–297; the sequence is IQINSCSVRLVDIK. Lysine 297 is covalently cross-linked (Glycyl lysine isopeptide (Lys-Gly) (interchain with G-Cter in SUMO)). Residues lysine 300 and lysine 306 each participate in a glycyl lysine isopeptide (Lys-Gly) (interchain with G-Cter in SUMO2) cross-link. Phosphoserine occurs at positions 331 and 362. The sufficient to mediate interaction with ETS1 stretch occupies residues 333-478; sequence GSTDVDEPLE…SSSLRRGSGS (146 aa). The disordered stretch occupies residues 345 to 386; sequence ISAPRSEPVINNDNPLESNDEKEGQEATCSRPQIVPEPMDFR. Residues lysine 366 and lysine 387 each participate in a glycyl lysine isopeptide (Lys-Gly) (interchain with G-Cter in SUMO2) cross-link. 5 positions are modified to phosphoserine: serine 394, serine 407, serine 409, serine 410, and serine 451. A disordered region spans residues 401 to 596; the sequence is GQDHDFSESS…KRGPRIPKDE (196 aa). Over residues 466–482 the composition is skewed to polar residues; that stretch reads ETCSSSLRRGSGSQPQE. Over residues 530 to 591 the composition is skewed to basic residues; that stretch reads SGKRRKKRRH…LKRRRKRGPR (62 aa). Short sequence motifs (nuclear localization signal) lie at residues 536-553 and 568-592; these read KRRH…RKKD and KRWQ…GPRI. Residue lysine 594 forms a Glycyl lysine isopeptide (Lys-Gly) (interchain with G-Cter in SUMO2) linkage. In terms of domain architecture, SAND spans 595 to 676; the sequence is DENINFKQSE…KVLMENKFLP (82 aa). 2 consecutive DNA-binding regions (HMG box) follow at residues 677-753 and 769-837; these read EPPS…KTYI and PKRP…AAYR. The Nuclear localization signal signature appears at 717–734; it reads KKCSETWKTIFAKEKGKF. Residues 835 to 879 form a disordered region; sequence AYRAKGKPNSAKKRVVKAEKSKKKKEEEEDEEDEQEEENEEDDDK. Basic residues predominate over residues 838–857; that stretch reads AKGKPNSAKKRVVKAEKSKK. The span at 861-879 shows a compositional bias: acidic residues; it reads EEEDEEDEQEEENEEDDDK.

Homodimer; isoforms are able to heterodimerize. Interacts with members of the HP1 family of nonhistone chromosomal protein, such as CBX5 and CBX3 via the PxVxL motif. Interacts with ETS1; the interaction is direct and modulates ETS1 transcriptional activity. Interacts with the MRN complex which is composed of two heterodimers RAD50/MRE11 associated with a single NBN; recruits the complex to PML-related bodies. Interacts with HIPK2; positively regulates TP53-dependent transcription. Interacts with CASP8AP2; may negatively regulate CASP8AP2 export from the nucleus to the cytoplasm. Interacts with SUMO1P1/SUMO5. In terms of assembly, (Microbial infection) Interacts with Epstein-Barr virus EBNA-LP; this interaction is important for EBNA-LP coactivator activity. As to quaternary structure, (Microbial infection) Interacts with human cytomegalovirus/HHV-5 protein UL123; may play a role in infection by the virus. Post-translationally, sumoylated. Sumoylation depends on a functional nuclear localization signal but is not necessary for nuclear import or nuclear body targeting. Sumoylated. Sumoylated with SUMO1. Sumoylation depends on a functional nuclear localization signal but is not necessary for nuclear import or nuclear body targeting. Sumoylation may stabilize the interaction with CBX5. In terms of processing, (Microbial infection) Immediate early protein IE1 of human cytomegalovirus (HHV-5) interferes with the sumoylation of SP100. In terms of tissue distribution, widely expressed. Sp100-B is expressed only in spleen, tonsil, thymus, mature B-cell line and some T-cell line, but not in brain, liver, muscle or non-lymphoid cell lines.

The protein localises to the nucleus. It localises to the PML body. Its subcellular location is the nuclear body. The protein resides in the cytoplasm. Together with PML, this tumor suppressor is a major constituent of the PML bodies, a subnuclear organelle involved in a large number of physiological processes including cell growth, differentiation and apoptosis. Functions as a transcriptional coactivator of ETS1 and ETS2 according to PubMed:11909962. Under certain conditions, it may also act as a corepressor of ETS1 preventing its binding to DNA according to PubMed:15247905. Through the regulation of ETS1 it may play a role in angiogenesis, controlling endothelial cell motility and invasion. Through interaction with the MRN complex it may be involved in the regulation of telomeres lengthening. May also regulate TP53-mediated transcription and through CASP8AP2, regulate FAS-mediated apoptosis. Also plays a role in infection by viruses, including human cytomegalovirus and Epstein-Barr virus, through mechanisms that may involve chromatin and/or transcriptional regulation. The sequence is that of Nuclear autoantigen Sp-100 (SP100) from Homo sapiens (Human).